A 1857-amino-acid chain; its full sequence is Chitin synthase Y (1857 aa).

Residues 1-22 (MVGPSPAGTVPSHAQSSLPSLP) form a disordered region. The Myosin motor domain occupies 1 to 788 (MVGPSPAGTV…CWADLAKVGE (788 aa)). 102–109 (GESGAGKT) lines the ATP pocket. Residues 601–653 (SSKPLRMPSMARRKASPASRLTFDAPTAEEPEDNESYGGSTAKSSGRRKSAMS) are disordered. Asn-634 carries N-linked (GlcNAc...) asparagine glycosylation. The interval 668-692 (LEIVNKCLSSPSLNPYFIFCLKPND) is actin-binding. 2 consecutive transmembrane segments (helical) span residues 898–918 (WMAI…RLFG) and 937–957 (LIIW…PGLV). Residues 961-1020 (QHVYSAAELESHNGKNGHDSYIAIRGVVFDLDKFMPRHYPDIVPQSSLKKYAGMDATGLF) enclose the Cytochrome b5 heme-binding domain. Asn-1047 and Asn-1072 each carry an N-linked (GlcNAc...) asparagine glycan. The chain crosses the membrane as a helical span at residues 1209-1229 (FILAISILICAVVIFKFAAAL). A glycan (N-linked (GlcNAc...) asparagine) is linked at Asn-1572. Transmembrane regions (helical) follow at residues 1603–1623 (LLST…IVWL), 1630–1650 (IPWT…LIFI), and 1657–1677 (MIGW…ALPF). The DEK-C domain occupies 1799–1854 (LPSDDAILAEIREILRTADLMTVTKKSIKQELERRFGVNLDAKRPYINSATEAVLS).

In the N-terminal section; belongs to the TRAFAC class myosin-kinesin ATPase superfamily. Myosin family. This sequence in the C-terminal section; belongs to the chitin synthase family. Class V subfamily.

Its subcellular location is the cell membrane. The protein resides in the cell septum. It is found in the cell tip. The catalysed reaction is [(1-&gt;4)-N-acetyl-beta-D-glucosaminyl](n) + UDP-N-acetyl-alpha-D-glucosamine = [(1-&gt;4)-N-acetyl-beta-D-glucosaminyl](n+1) + UDP + H(+). In terms of biological role, polymerizes chitin, a structural polymer of the cell wall and septum, by transferring the sugar moiety of UDP-GlcNAc to the non-reducing end of the growing chitin polymer. Specifically involved in hyphal elongation and new cell wall formation. This is Chitin synthase Y from Aspergillus oryzae (strain ATCC 42149 / RIB 40) (Yellow koji mold).